Reading from the N-terminus, the 646-residue chain is Chaperone protein DnaK (646 aa).

The residue at position 197 (Thr197) is a Phosphothreonine; by autocatalysis. The tract at residues Gln599–Lys646 is disordered. Residues Ala610–Lys628 show a composition bias toward polar residues. Residues Asp633–Lys646 show a composition bias toward acidic residues.

It belongs to the heat shock protein 70 family.

Functionally, acts as a chaperone. In Treponema denticola (strain ATCC 35405 / DSM 14222 / CIP 103919 / JCM 8153 / KCTC 15104), this protein is Chaperone protein DnaK.